A 411-amino-acid chain; its full sequence is Elongation factor 1-gamma (411 aa).

A GST N-terminal domain is found at 3–84; the sequence is LTLWSGVNPE…HIARLDRSGG (82 aa). Positions 90–216 constitute a GST C-terminal domain; it reads TPLEGSQVDM…QGATFGAREG (127 aa). A disordered region spans residues 212 to 265; the sequence is GAREGGAKGQGRGCARPGREEAERAAAAADGAEEEDEAPREKKKPNPLDELPPS. Positions 214–223 are enriched in gly residues; sequence REGGAKGQGR. The 157-residue stretch at 255–411 folds into the EF-1-gamma C-terminal domain; that stretch reads KPNPLDELPP…RPVLEGRVFK (157 aa).

As to quaternary structure, EF-1 is composed of four subunits: alpha, beta, delta, and gamma.

Functionally, probably plays a role in anchoring the complex to other cellular components. This chain is Elongation factor 1-gamma, found in Trypanosoma cruzi.